The following is a 111-amino-acid chain: UPF0060 membrane protein Pden_1837 (111 aa).

4 consecutive transmembrane segments (helical) span residues 7 to 27 (IAVY…FWAW), 30 to 50 (LGKS…FAWL), 62 to 82 (AYAA…WLTE), and 91 to 111 (ILGG…PRAA).

The protein belongs to the UPF0060 family.

It localises to the cell inner membrane. This Paracoccus denitrificans (strain Pd 1222) protein is UPF0060 membrane protein Pden_1837.